Consider the following 648-residue polypeptide: Sodium/nucleoside cotransporter 1 (648 aa).

Topologically, residues 1–80 (MADNTQRQRE…ARSFCREHRQ (80 aa)) are cytoplasmic. Residues 81–104 (LFGWICKGLLSTACLGFLMVACLL) form a helical membrane-spanning segment. The Extracellular segment spans residues 105 to 109 (DLQRA). The chain crosses the membrane as a helical span at residues 110-128 (LALLIITCVVLVFLAYDLL). Over 129 to 147 (KRLLGSKLRRCVKFQGHSC) the chain is Cytoplasmic. A helical transmembrane segment spans residues 148–167 (LSLWLKRGLALAAGVGLILW). The Extracellular segment spans residues 168-178 (LSLDTAQRPEQ). Residues 179 to 195 (LVSFAGICVFLVLLFAG) traverse the membrane as a helical segment. The Cytoplasmic portion of the chain corresponds to 196 to 201 (SKHHRA). Residues 202–222 (VSWRAVSWGLGLQFVLGLFVI) form a helical membrane-spanning segment. Topologically, residues 223–261 (RTEPGFIAFQWLGDQIQVFLSYTEAGSSFVFGEALVKDV) are extracellular. Residues 262–283 (FAFQVLPIIIFFSCVMSVLYYL) traverse the membrane as a helical segment. Over 284–294 (GLMQWVILKIA) the chain is Cytoplasmic. A helical transmembrane segment spans residues 295–318 (WLMQVTMGTSATETLSVAGNIFVS). Over 319 to 337 (QTEAPLLIRPYLADMTLSE) the chain is Extracellular. A helical transmembrane segment spans residues 338–360 (VHVVMTGGYATIAGSLLGAYISF). Residues 361 to 366 (GIDAAS) lie on the Cytoplasmic side of the membrane. A helical membrane pass occupies residues 367 to 386 (LIAASVMAAPCALALSKLVY). The Extracellular portion of the chain corresponds to 387 to 423 (PEVEESKFRSENGVKLTYGDAQNLLEAASAGAAISVK). Residues 424-446 (VVANIAANLIAFLAVLAFVNAAL) form a helical membrane-spanning segment. The Cytoplasmic portion of the chain corresponds to 447–457 (SWLGDMVDIQG). The helical transmembrane segment at 458–479 (LSFQLICSYVLRPVAFLMGVAW) threads the bilayer. The Extracellular segment spans residues 480-534 (EDCPVVAELLGIKFFLNEFVAYQELSQYKQRRLAGAEEWLGDKKQWISVRAEILT). The chain crosses the membrane as a helical span at residues 535–558 (TYALCGFANFSSIGIMLGGLTSLV). The Cytoplasmic segment spans residues 559–569 (PQRRSDFSQIV). A helical membrane pass occupies residues 570-592 (LRALITGAFVSLLNACVAGILYV). The Extracellular portion of the chain corresponds to 593 to 648 (PRGVEVDCVSLLNQTVSSSSFEVYLCCRQVFQSTSSEFSQVALDNCCRFYNHTVCT). Asn-605 and Asn-643 each carry an N-linked (GlcNAc...) asparagine glycan.

The protein belongs to the concentrative nucleoside transporter (CNT) (TC 2.A.41) family. N-glycosylated. N-glycosylation is required for localization to the plasma membrane and the transporter activity. As to expression, expressed predominantly in the brush-border membranes of the polarized epithelial cells of jejunum and renal cortical tubules and in the bile canalicular membranes of liver parenchymal cells.

It is found in the cell membrane. The protein resides in the apical cell membrane. The enzyme catalyses uridine(out) + Na(+)(out) = uridine(in) + Na(+)(in). It catalyses the reaction thymidine(out) + Na(+)(out) = thymidine(in) + Na(+)(in). It carries out the reaction cytidine(out) + Na(+)(out) = cytidine(in) + Na(+)(in). The catalysed reaction is adenosine(out) + Na(+)(out) = adenosine(in) + Na(+)(in). Its activity is regulated as follows. Due to its high apparent affinity but slow transport, adenosine could act as a negative regulator of pyrimidine transport under some conditions. Its function is as follows. Sodium and pyrimidine nucleoside symporter of the plasma membrane that imports uridine, thymidine and cytidine into cells by coupling their transport to the transmembrane sodium electrochemical gradient. Also transports adenosine, an atypical substrate transported with high apparent affinity, but low maximum velocity. Therefore, exhibits the transport characteristics of the nucleoside transport system cit or N2 subtype (N2/cit). Involved in renal nucleoside (re)absorption. In Rattus norvegicus (Rat), this protein is Sodium/nucleoside cotransporter 1.